The primary structure comprises 768 residues: Cullin-3 (768 aa).

Ser-2 carries the N-acetylserine modification. The interval 2–41 (SNLSKGTGSRKDTKMRIRAFPMTMDEKYVNSIWDLLKNAI) is interaction with KLHL18. Ser-585 bears the Phosphoserine mark. The segment at 677-698 (VAAKQGESDPERKETRQKVDDD) is disordered. The segment covering 682–698 (GESDPERKETRQKVDDD) has biased composition (basic and acidic residues). Positions 698–760 (DRKHEIEAAI…REYLARTPED (63 aa)) constitute a Cullin neddylation domain. Residue Lys-712 forms a Glycyl lysine isopeptide (Lys-Gly) (interchain with G-Cter in NEDD8) linkage.

It belongs to the cullin family. In terms of assembly, forms neddylation-dependent homodimers. Component of multiple BCR (BTB-CUL3-RBX1) E3 ubiquitin-protein ligase complexes formed of CUL3, RBX1 and a variable BTB domain-containing protein acting as both, adapter to cullin and substrate recognition subunit. The BCR complex may be active as a heterodimeric complex, in which NEDD8, covalently attached to one CUL3 molecule, binds to the C-terminus of a second CUL3 molecule. Interacts with RBX1, RNF7 and TIP120A/CAND1. Part of the BCR(SPOP) containing SPOP, and of BCR containing homodimeric SPOPL or the heterodimer formed by SPOP and SPOPL. Part of the probable BCR(KLHL9-KLHL13) complex with BTB domain proteins KLHL9 and KLHL13. Part of the BCR(KLHL41) complex containing KLHL41. Component of the BCR(KLHL12) E3 ubiquitin ligase complex, at least composed of CUL3 and KLHL12 and RBX1. Component of the BCR(KLHL3) E3 ubiquitin ligase complex, at least composed of CUL3 and KLHL3 and RBX1. Part of the BCR(ENC1) complex containing ENC1. Part of a complex consisting of BMI1/PCGF4, CUL3 and SPOP. Part of a complex consisting of BRMS1, CUL3 and SPOP. Component of the BCR(KLHL21) E3 ubiquitin ligase complex, at least composed of CUL3, KLHL21 and RBX1. Component of the BCR(KLHL22) E3 ubiquitin ligase complex, at least composed of CUL3, KLHL22 and RBX1. Component of the BCR(KLHL25) E3 ubiquitin ligase complex, at least composed of CUL3, KLHL25 and RBX1. Part of a complex consisting of MACROH2A1, CUL3 and SPOP. Component of the BCR(KLHL42) E3 ubiquitin ligase complex, at least composed of CUL3 and KLHL42. Component of the BCR(KBTBD8) E3 ubiquitin ligase complex, at least composed of CUL3, KBTBD8 and RBX1. Interacts with KLHL42 (via the BTB domain). Interacts with KATNA1; the interaction is enhanced by KLHL42. Interacts with KCTD5, KLHL9, KLHL11, KLHL13, GAN, ZBTB16, KLHL3, KLHL15, KLHL20, KLHL36, GMCL2, BTBD1. Part of a complex that contains CUL3, RBX1 and GAN. Interacts (via BTB domain) with KLHL17; the interaction regulates surface GRIK2 expression. Interacts with KCTD7. Part of the BCR(GAN) complex containing GAN. Part of the BCR(KEAP1) complex containing KEAP1. Interacts with KAT5 and ATF2. Interacts with KCTD17 in the BCR(KCTD17) E3 ubiquitin ligase complex, at least composed of CUL3, KCTD17 and RBX1. Interacts (when neddylated) with ARIH1; leading to activate the E3 ligase activity of ARIH1. Interacts with COPS9. Interacts with PPP2R5B; this interaction is indirect and mediated through KLHL15-binding and leads to PPP2R5B proteasomal degradation. Interacts with RBBP8/CtIP; this interaction is indirect and mediated through KLHL15-binding and leads to RBBP8 proteasomal degradation. Interacts with KLHL24 in the BCR(KLHL24) E3 ubiquitin ligase complex, composed of CUL3, RBX1 and KLHL24. Interacts with RHOBTB2. Interacts with CYCE. Interacts with KLHL10. Interacts with AURKA and KLHL18 (via BTB domain). Interacts (unneddylated form) with DCUN1D1, DCUN1D2, DCUN1D3, DCUN1D4 and DCUN1D5; these interactions promote the cullin neddylation. Component of a BCR3 (BTB-CUL3-RBX1) E3 ubiquitin ligase complex, also named Cul3-RING ubiquitin ligase complex CUL3(KBTBD6/7), composed of CUL3, RBX1, KBTBD6 and KBTBD7. Component of the BCR(KBTBD2) E3 ubiquitin ligase complex, at least composed of CUL3, KBTBD2 and RBX1. Interacts with KBTBD2 (via the BTB domain). Component of the BCR(KBTBD4) E3 ubiquitin ligase complex, at least composed of CUL3, KBTBD4 and RBX1. Post-translationally, neddylated. Attachment of NEDD8 is required for the E3 ubiquitin-protein ligase activity of the BCR complex. Deneddylated via its interaction with the COP9 signalosome (CSN) complex. In terms of tissue distribution, widely expressed, with highest expression in brain, spleen and testis. In the testis, it is mainly expressed in spermatids.

It is found in the nucleus. It localises to the golgi apparatus. The protein resides in the cell projection. The protein localises to the cilium. Its subcellular location is the flagellum. It is found in the cytoplasm. It localises to the cytoskeleton. The protein resides in the spindle. The protein localises to the microtubule organizing center. Its subcellular location is the centrosome. It is found in the spindle pole. Its pathway is protein modification; protein ubiquitination. Its function is as follows. Core component of multiple cullin-RING-based BCR (BTB-CUL3-RBX1) E3 ubiquitin-protein ligase complexes which mediate the ubiquitination and subsequent proteasomal degradation of target proteins. BCR complexes and ARIH1 collaborate in tandem to mediate ubiquitination of target proteins. As a scaffold protein may contribute to catalysis through positioning of the substrate and the ubiquitin-conjugating enzyme. The E3 ubiquitin-protein ligase activity of the complex is dependent on the neddylation of the cullin subunit and is inhibited by the association of the deneddylated cullin subunit with TIP120A/CAND1. The functional specificity of the BCR complex depends on the BTB domain-containing protein as the substrate recognition component. BCR(KLHL42) is involved in ubiquitination of KATNA1. BCR(SPOP) is involved in ubiquitination of BMI1/PCGF4, BRMS1, MACROH2A1 and DAXX, GLI2 and GLI3. Can also form a cullin-RING-based BCR (BTB-CUL3-RBX1) E3 ubiquitin-protein ligase complex containing homodimeric SPOPL or the heterodimer formed by SPOP and SPOPL; these complexes have lower ubiquitin ligase activity. BCR(KLHL9-KLHL13) controls the dynamic behavior of AURKB on mitotic chromosomes and thereby coordinates faithful mitotic progression and completion of cytokinesis. BCR(KLHL12) is involved in ER-Golgi transport by regulating the size of COPII coats, thereby playing a key role in collagen export, which is required for embryonic stem (ES) cells division: BCR(KLHL12) acts by mediating monoubiquitination of SEC31 (SEC31A or SEC31B). BCR(KLHL3) acts as a regulator of ion transport in the distal nephron; by mediating ubiquitination of WNK4. The BCR(KLHL20) E3 ubiquitin ligase complex is involved in interferon response and anterograde Golgi to endosome transport: it mediates both ubiquitination leading to degradation and 'Lys-33'-linked ubiquitination. The BCR(KLHL21) E3 ubiquitin ligase complex regulates localization of the chromosomal passenger complex (CPC) from chromosomes to the spindle midzone in anaphase and mediates the ubiquitination of AURKB. The BCR(KLHL22) ubiquitin ligase complex mediates monoubiquitination of PLK1, leading to PLK1 dissociation from phosphoreceptor proteins and subsequent removal from kinetochores, allowing silencing of the spindle assembly checkpoint (SAC) and chromosome segregation. The BCR(KLHL22) ubiquitin ligase complex is also responsible for the amino acid-stimulated 'Lys-48' polyubiquitination and proteasomal degradation of DEPDC5. Through the degradation of DEPDC5, releases the GATOR1 complex-mediated inhibition of the TORC1 pathway. The BCR(KLHL25) ubiquitin ligase complex is involved in translational homeostasis by mediating ubiquitination and subsequent degradation of hypophosphorylated EIF4EBP1 (4E-BP1). The BCR(KLHL25) ubiquitin ligase complex is also involved in lipid synthesis by mediating ubiquitination and degradation of ACLY. The BCR(KBTBD8) complex acts by mediating monoubiquitination of NOLC1 and TCOF1, leading to remodel the translational program of differentiating cells in favor of neural crest specification. Involved in ubiquitination of cyclin E and of cyclin D1 (in vitro) thus involved in regulation of G1/S transition. Involved in the ubiquitination of KEAP1, ENC1 and KLHL41. In concert with ATF2 and RBX1, promotes degradation of KAT5 thereby attenuating its ability to acetylate and activate ATM. The BCR(KCTD17) E3 ubiquitin ligase complex mediates ubiquitination and degradation of TCHP, a down-regulator of cilium assembly, thereby inducing ciliogenesis. The BCR(KLHL24) E3 ubiquitin ligase complex mediates ubiquitination of KRT14, controls KRT14 levels during keratinocytes differentiation, and is essential for skin integrity. The BCR(KLHL18) E3 ubiquitin ligase complex mediates the ubiquitination of AURKA leading to its activation at the centrosome which is required for initiating mitotic entry. The BCR(KEAP1) E3 ubiquitin ligase complex acts as a key sensor of oxidative and electrophilic stress by mediating ubiquitination and degradation of NFE2L2/NRF2, a transcription factor regulating expression of many cytoprotective genes. As part of the CUL3(KBTBD6/7) E3 ubiquitin ligase complex functions mediates 'Lys-48' ubiquitination and proteasomal degradation of TIAM1. By controlling the ubiquitination of that RAC1 guanine exchange factors (GEF), regulates RAC1 signal transduction and downstream biological processes including the organization of the cytoskeleton, cell migration and cell proliferation. The BCR(KBTBD4) E3 ubiquitin ligase complex targets CoREST corepressor complex components RCOR1, KDM1A/LSD1 and HDAC2 for proteasomal degradation with RCOR1 likely to be the primary target while degradation of KDM1A and HDAC2 is likely due to their association with RCOR1. It also targets RCOR3, MIER2 and MIER3 for proteasomal degradation as well as associated proteins ZNF217 and RREB1 with degradation being dependent on the presence of an ELM2 domain in the target proteins. The BCR(ARMC5) complex mediates premature transcription termination of transcripts that are unfavorably configured for transcriptional elongation by mediating ubiquitination of Pol II subunit POLR2A. Required for 'Lys-63'-linked ubiquitination of large ribosomal subunit protein MRPL12. The chain is Cullin-3 (Cul3) from Mus musculus (Mouse).